We begin with the raw amino-acid sequence, 123 residues long: SGSCTTKTCWTTLPKFREIGYILKEKYSEAVHVEAVRATRLRQPTFLKIKKPRTYRKPMVTDLVYIERSPNYCEEDSSTGSVGTQGRLCNRTSHHGDGCDLMCCGRGYNTHQYTKVWQCNCKF.

Ser-1 is lipidated: O-palmitoleoyl serine; by PORCN. The segment at 33–61 (VEAVRATRLRQPTFLKIKKPRTYRKPMVT) is disordered linker. Cys-89 and Cys-104 form a disulfide bridge. Asn-90 is a glycosylation site (N-linked (GlcNAc...) asparagine).

Belongs to the Wnt family. Palmitoleoylation is required for efficient binding to frizzled receptors. Depalmitoleoylation leads to Wnt signaling pathway inhibition.

It localises to the secreted. Its subcellular location is the extracellular space. The protein resides in the extracellular matrix. Ligand for members of the frizzled family of seven transmembrane receptors that functions in the canonical Wnt/beta-catenin signaling pathway. Required for normal fusion of the chorion and the allantois during placenta development. Required for central nervous system (CNS) angiogenesis and blood-brain barrier regulation. This is Protein Wnt-7b (WNT-7B) from Alopias vulpinus (Common thresher shark).